We begin with the raw amino-acid sequence, 77 residues long: Exodeoxyribonuclease 7 small subunit (77 aa).

This sequence belongs to the XseB family. As to quaternary structure, heterooligomer composed of large and small subunits.

The protein resides in the cytoplasm. The enzyme catalyses Exonucleolytic cleavage in either 5'- to 3'- or 3'- to 5'-direction to yield nucleoside 5'-phosphates.. Its function is as follows. Bidirectionally degrades single-stranded DNA into large acid-insoluble oligonucleotides, which are then degraded further into small acid-soluble oligonucleotides. The polypeptide is Exodeoxyribonuclease 7 small subunit (Carboxydothermus hydrogenoformans (strain ATCC BAA-161 / DSM 6008 / Z-2901)).